Reading from the N-terminus, the 362-residue chain is Phosphoglycolate phosphatase 1B, chloroplastic (362 aa).

The N-terminal 54 residues, 1–54 (MLSRSVASAVTPVSSSSLLPNSKPIFCLKTLSGYRSSSFCGGCIRKINHKPLRM), are a transit peptide targeting the chloroplast. T55 carries the post-translational modification N-acetylthreonine. Residue E80 is the Nucleophile of the active site. S356 is modified (phosphoserine).

It belongs to the HAD-like hydrolase superfamily. CbbY/CbbZ/Gph/YieH family.

It localises to the plastid. The protein resides in the chloroplast. It catalyses the reaction 2-phosphoglycolate + H2O = glycolate + phosphate. Its function is as follows. Photorespiratory enzyme that dephosphorylates the 2-phosphoglycolate produced by the RuBisCO oxygenation reaction. In Arabidopsis thaliana (Mouse-ear cress), this protein is Phosphoglycolate phosphatase 1B, chloroplastic (PGLP1B).